We begin with the raw amino-acid sequence, 220 residues long: Deoxyribose-phosphate aldolase (220 aa).

Asp-89 functions as the Proton donor/acceptor in the catalytic mechanism. Catalysis depends on Lys-151, which acts as the Schiff-base intermediate with acetaldehyde. The active-site Proton donor/acceptor is the Lys-180.

The protein belongs to the DeoC/FbaB aldolase family. DeoC type 1 subfamily.

The protein localises to the cytoplasm. It catalyses the reaction 2-deoxy-D-ribose 5-phosphate = D-glyceraldehyde 3-phosphate + acetaldehyde. The protein operates within carbohydrate degradation; 2-deoxy-D-ribose 1-phosphate degradation; D-glyceraldehyde 3-phosphate and acetaldehyde from 2-deoxy-alpha-D-ribose 1-phosphate: step 2/2. Its function is as follows. Catalyzes a reversible aldol reaction between acetaldehyde and D-glyceraldehyde 3-phosphate to generate 2-deoxy-D-ribose 5-phosphate. The sequence is that of Deoxyribose-phosphate aldolase from Staphylococcus haemolyticus (strain JCSC1435).